The chain runs to 72 residues: Small ribosomal subunit protein bS20 (72 aa).

The protein belongs to the bacterial ribosomal protein bS20 family.

Binds directly to 16S ribosomal RNA. The sequence is that of Small ribosomal subunit protein bS20 (rpsT) from Aeromonas salmonicida.